Consider the following 397-residue polypeptide: Dimethyladenosine transferase 2, mitochondrial (397 aa).

A mitochondrion-targeting transit peptide spans 1-44 (MRGLAMRLPPRLALSVLAGRGPSCILGSGAATRKDWQERNRRSF). 3 residues coordinate S-adenosyl-L-methionine: I75, E124, and D150. Residues 329–330 (KR) are DNA-binding.

The protein belongs to the class I-like SAM-binding methyltransferase superfamily. rRNA adenine N(6)-methyltransferase family. KsgA subfamily. As to quaternary structure, homodimer. Component of the mitochondrial transcription initiation complex, composed at least of TFB2M, TFAM and POLRMT. In this complex TFAM recruits POLRMT to the promoter whereas TFB2M induces structural changes in POLRMT to enable promoter opening and trapping of the DNA non-template strand. Interacts with mitochondrial RNA polymerase POLRMT. Interacts with TFAM.

Its subcellular location is the mitochondrion. The catalysed reaction is adenosine in rRNA + S-adenosyl-L-methionine = N(6)-methyladenosine in rRNA + S-adenosyl-L-homocysteine + H(+). S-adenosyl-L-methionine-dependent rRNA methyltransferase which may methylate two specific adjacent adenosines in the loop of a conserved hairpin near the 3'-end of 12S mitochondrial rRNA. Component of the mitochondrial transcription initiation complex, composed at least of TFB2M, TFAM and POLRMT that is required for basal transcription of mitochondrial DNA. In this complex TFAM recruits POLRMT to a specific promoter whereas TFB2M induces structural changes in POLRMT to enable promoter opening and trapping of the DNA non-template strand. Stimulates transcription independently of the methyltransferase activity. The sequence is that of Dimethyladenosine transferase 2, mitochondrial from Rattus norvegicus (Rat).